Reading from the N-terminus, the 417-residue chain is Serine hydroxymethyltransferase (417 aa).

(6S)-5,6,7,8-tetrahydrofolate contacts are provided by residues Leu-121 and 125–127; that span reads GHL. Lys-229 bears the N6-(pyridoxal phosphate)lysine mark. Residue 355 to 357 coordinates (6S)-5,6,7,8-tetrahydrofolate; the sequence is SPF.

Belongs to the SHMT family. Homodimer. The cofactor is pyridoxal 5'-phosphate.

The protein localises to the cytoplasm. The catalysed reaction is (6R)-5,10-methylene-5,6,7,8-tetrahydrofolate + glycine + H2O = (6S)-5,6,7,8-tetrahydrofolate + L-serine. Its pathway is one-carbon metabolism; tetrahydrofolate interconversion. The protein operates within amino-acid biosynthesis; glycine biosynthesis; glycine from L-serine: step 1/1. Functionally, catalyzes the reversible interconversion of serine and glycine with tetrahydrofolate (THF) serving as the one-carbon carrier. This reaction serves as the major source of one-carbon groups required for the biosynthesis of purines, thymidylate, methionine, and other important biomolecules. Also exhibits THF-independent aldolase activity toward beta-hydroxyamino acids, producing glycine and aldehydes, via a retro-aldol mechanism. This chain is Serine hydroxymethyltransferase, found in Aeromonas salmonicida (strain A449).